The following is a 99-amino-acid chain: NADH-quinone oxidoreductase subunit K 1 (99 aa).

Helical transmembrane passes span 3-23, 28-48, and 59-79; these read PVNY…GVLV, IVVF…LVTF, and IVAF…LAII.

The protein belongs to the complex I subunit 4L family. NDH-1 is composed of 14 different subunits. Subunits NuoA, H, J, K, L, M, N constitute the membrane sector of the complex.

It is found in the cell membrane. It carries out the reaction a quinone + NADH + 5 H(+)(in) = a quinol + NAD(+) + 4 H(+)(out). NDH-1 shuttles electrons from NADH, via FMN and iron-sulfur (Fe-S) centers, to quinones in the respiratory chain. The immediate electron acceptor for the enzyme in this species is believed to be a menaquinone. Couples the redox reaction to proton translocation (for every two electrons transferred, four hydrogen ions are translocated across the cytoplasmic membrane), and thus conserves the redox energy in a proton gradient. This Streptomyces griseus subsp. griseus (strain JCM 4626 / CBS 651.72 / NBRC 13350 / KCC S-0626 / ISP 5235) protein is NADH-quinone oxidoreductase subunit K 1.